A 1577-amino-acid chain; its full sequence is MKTFLLIFLLICVCKGITNITTPSIYFDLKKINRFQDYLNNGITPSINLTFHDFYYPDVCVNTIKNIDGSTNFVKSSFLNAPTNFANLYITKGSKMTVKPNQILGAFINILCIEGSLEVPVGVFPFFIGALVILPGGNFKSESSFRFMNLVNSKIDPLNFFPGILTLGGSLSILGPKSIKYSANRLGDFQFQLLELIDPNSFNSDYKANIYSESFVTGQQCDFVSITNGYTLTVGGCQGVPSTDVNIYIFFATVDYDCTFIDSDSEVPASIYISGDTNVHIENFFLNSLGKTTNANYNDTILIFSPTDDTNVTDIIIGTNQRYRNSLFVEFSNNVTLRNNFIRESIESRSPLMFFASSPILEGNLVVSNSGSSVIAQFGTEFIQSTNNSYFLEPPTQPVIPNDNNMDYGTEGNGIYSLSPIVSFTTDVFVGQLISINFNFIANRSLVTGFNYDCFAPCYPGSPIISNLVQHSVDFNIIKPTFSYSHGNTTSSTTTSSTTTNTNSHFLLNVNDNGNEPSSYYSFNQLSIASEAIKVNLPIGTLGIGNLFATNNFKIDGALERLDILNSIFNLPPPISNNFSQSGILLSTTTSMLNSYVFVSIGSEPTRIESQIYGSTITPYYYNNIETLDLFQIQSIFPSVQYQIIKNSTINITINITTTTTTTTTPTTNNVVCSFTSIVNQQSSVTNEISINETLIQMDPILNNCVFPLSIDQEGSLKLRVTIKNQNSTLENQYYYIIDFPEITIFQSFQFYTGIKFIDVQSSSSSSQQTSSFSPTTTTFLNLLSTTENSNGFLNGCQISNQCTLSNNVKYVSSLPNVTNSPDFQLFQSGITPIIPYDPVVINLGIEKNKTFQFQLFFTFYQPIDQYSSPLSIFIQSEPYLLLDPLIDAPNFKNFTFFYDNLNQDSIEISFISRGDIYLTSMAIYSLDLVSYESSDSSSSSSNSSSSTGNGIGDIVNNEDNHKKLVIALSVSIPVAALLVILCFGIFICYNNNKKNKNETKGKDIETNTDKKDDENENENCKFQFKDEFLTNPNEINIQLKKLMINKSSTLPPQSTISIDTSPSSENTTFTESLTPKKSATVNGEIDFSRNSTNESTVSNSSSENNSDNNNNNNNKCKKEKLSSFPTIPGTNLTNIPLNLVGRKSRNPEDKYRTNNDILVCLQESHYFKPDDPSIPIEFSESVLDFGRGSKCLIDETYIYTISVKNKSTTDYNILLILPIDNNTGTISTDTQYFQINAGESKPISFSISLNCTTKYFEKIGVSIEELNYHTFICVHMESELSTRLDFSELDFDEICGQGTYGMVYKGKWRSQVVAIKMMRVGTVNCDEVYREMDIMGKIRHQNVISFIGCVVSLEHLCIVTEFSPIGSLGDLIHGDNNQKKSNTNTITNTITNTNTNTNTSTSTSTKLTVKQKLRIAIDIARGCQFLHQCGIIHRDLKPDNVLVFDINHNAPVCAKISDFGTSKETNEFSNKNTNCVGTPIYMSNEILEKKTYDNSTDVYSFAVLFYEMMIEEVPFSEIDEKWEIPSKVISGWRPTKGLNSLDRDIKNLINICWAPHSLPSFDEIVFSLVKIFKRFN.

An N-terminal signal peptide occupies residues 1–16 (MKTFLLIFLLICVCKG). The Extracellular segment spans residues 17–966 (ITNITTPSIY…NNEDNHKKLV (950 aa)). The chain crosses the membrane as a helical span at residues 967 to 987 (IALSVSIPVAALLVILCFGIF). At 988–1577 (ICYNNNKKNK…SLVKIFKRFN (590 aa)) the chain is on the cytoplasmic side. Basic and acidic residues predominate over residues 998–1014 (NETKGKDIETNTDKKDD). 2 disordered regions span residues 998-1019 (NETK…NENE) and 1050-1128 (TLPP…FPTI). Over residues 1050 to 1082 (TLPPQSTISIDTSPSSENTTFTESLTPKKSATV) the composition is skewed to polar residues. Residues 1091-1115 (NSTNESTVSNSSSENNSDNNNNNNN) show a composition bias toward low complexity. The Protein kinase domain maps to 1290-1573 (LDFDEICGQG…EIVFSLVKIF (284 aa)). Residues 1296-1304 (CGQGTYGMV) and Lys-1317 contribute to the ATP site. Residue Asp-1436 is the Proton acceptor of the active site.

This sequence in the N-terminal section; belongs to the GDT family. The protein in the C-terminal section; belongs to the protein kinase superfamily. TKL Ser/Thr protein kinase family.

The protein resides in the membrane. It carries out the reaction L-seryl-[protein] + ATP = O-phospho-L-seryl-[protein] + ADP + H(+). The enzyme catalyses L-threonyl-[protein] + ATP = O-phospho-L-threonyl-[protein] + ADP + H(+). The protein is Probable serine/threonine-protein kinase gdt9 (gdt9) of Dictyostelium discoideum (Social amoeba).